Here is a 423-residue protein sequence, read N- to C-terminus: Diaminobutyrate--2-oxoglutarate transaminase (423 aa).

At lysine 271 the chain carries N6-(pyridoxal phosphate)lysine.

This sequence belongs to the class-III pyridoxal-phosphate-dependent aminotransferase family. Pyridoxal 5'-phosphate is required as a cofactor.

It carries out the reaction L-2,4-diaminobutanoate + 2-oxoglutarate = L-aspartate 4-semialdehyde + L-glutamate. The protein operates within amine and polyamine biosynthesis; ectoine biosynthesis; L-ectoine from L-aspartate 4-semialdehyde: step 1/3. In terms of biological role, catalyzes reversively the conversion of L-aspartate beta-semialdehyde (ASA) to L-2,4-diaminobutyrate (DABA) by transamination with L-glutamate. The protein is Diaminobutyrate--2-oxoglutarate transaminase (ectB) of Streptomyces coelicolor (strain ATCC BAA-471 / A3(2) / M145).